We begin with the raw amino-acid sequence, 366 residues long: Alanine racemase (366 aa).

The active-site Proton acceptor; specific for D-alanine is the Lys40. Lys40 bears the N6-(pyridoxal phosphate)lysine mark. Arg136 lines the substrate pocket. Tyr263 functions as the Proton acceptor; specific for L-alanine in the catalytic mechanism. Position 310 (Met310) interacts with substrate.

This sequence belongs to the alanine racemase family. Pyridoxal 5'-phosphate serves as cofactor.

It catalyses the reaction L-alanine = D-alanine. It participates in amino-acid biosynthesis; D-alanine biosynthesis; D-alanine from L-alanine: step 1/1. In terms of biological role, catalyzes the interconversion of L-alanine and D-alanine. May also act on other amino acids. The protein is Alanine racemase (alr) of Streptococcus agalactiae serotype Ia (strain ATCC 27591 / A909 / CDC SS700).